The chain runs to 157 residues: Class-10 pathogenesis-related protein 1 (157 aa).

It belongs to the BetVI family. In terms of tissue distribution, high levels in roots and not detectable in hypocotyls, cotyledons, stems, leaves and flower buds of untreated plants. After induction, high levels are present in the vascular bundles of leaves.

It is found in the cytoplasm. This chain is Class-10 pathogenesis-related protein 1 (MSPR10-1), found in Medicago sativa (Alfalfa).